Here is a 176-residue protein sequence, read N- to C-terminus: Large ribosomal subunit protein uL16 (176 aa).

It belongs to the universal ribosomal protein uL16 family.

This Picrophilus torridus (strain ATCC 700027 / DSM 9790 / JCM 10055 / NBRC 100828 / KAW 2/3) protein is Large ribosomal subunit protein uL16.